The following is a 685-amino-acid chain: Stromal interaction molecule 1 (685 aa).

Residues 1–22 (MDVCARLALWLLWGLLLHQGQS) form the signal peptide. Residues 23-213 (LSHSHSEKNT…LLTRHNHLKD (191 aa)) are Extracellular-facing. The tract at residues 24–43 (SHSHSEKNTGASSGATSEES) is disordered. Positions 32 to 41 (TGASSGATSE) are enriched in low complexity. 2 EF-hand domains span residues 64–97 (SFEA…EDLN) and 102–126 (TVKH…AWKA). Aspartate 76, aspartate 78, asparagine 80, aspartate 82, and glutamate 87 together coordinate Ca(2+). Asparagine 131 and asparagine 171 each carry an N-linked (GlcNAc...) asparagine glycan. The SAM domain maps to 132 to 200 (WTVDEVIQWL…QLKALDTVLF (69 aa)). A helical transmembrane segment spans residues 214–234 (FMLVVSIVIGVGGCWFAYIQN). The Cytoplasmic segment spans residues 235 to 685 (RYSKEHMKKM…LKIFKKPLKK (451 aa)). Residues 248-442 (LEGLHRAEQS…IEILCGFQIV (195 aa)) are a coiled coil. Phosphoserine is present on serine 257. The tract at residues 344-442 (PEALQKWLQL…IEILCGFQIV (99 aa)) is SOAR/CAD. The segment at 475–483 (DDVDDMDEE) is contributes to fast Ca(2+)-dependent inactivation of CRAC channels. Residues 490–499 (MQSPSLQSSV) show a composition bias toward low complexity. The tract at residues 490-542 (MQSPSLQSSVRQRLTEPQHGLGSQRDLTHSDSESSLHTSDRQRVAPKPPQMGR) is disordered. Threonine 504 is subject to Phosphothreonine. A Phosphoserine modification is found at serine 512. Over residues 515 to 532 (DLTHSDSESSLHTSDRQR) the composition is skewed to basic and acidic residues. Phosphothreonine is present on threonine 517. Serine 519, serine 521, serine 523, serine 524, serine 567, serine 575, serine 602, serine 608, serine 618, serine 621, and serine 628 each carry phosphoserine. Residues 596 to 685 (LMELNPSVPP…LKIFKKPLKK (90 aa)) form a disordered region. Over residues 608-620 (SPLLDSSHSHSPS) the composition is skewed to low complexity. The Microtubule tip localization signal motif lies at 642-645 (TRIP). The span at 655–666 (EEDNGSIGEETD) shows a compositional bias: acidic residues. The residue at position 660 (serine 660) is a Phosphoserine. Threonine 665 carries the post-translational modification Phosphothreonine. Position 668 is a phosphoserine (serine 668). Basic residues predominate over residues 670–685 (GRKKFPLKIFKKPLKK). A required for generation of inwardly rectifying CRAC currents region spans residues 672–685 (KKFPLKIFKKPLKK).

In terms of assembly, monomer in the presence of Ca(2+). It oligomerizes in absence of Ca(2+). Forms homooligomers and heterooligomers with STIM2. Interacts with pore-forming subunits of CRAC channels, ORAI1, ORAI2 and ORAI3; this interaction is potentiated upon Ca(2+) store depletion. Interacts (via the transmembrane region and the SOAR/CAD domain) with SPPL3; the interaction promotes the binding of STIM1 to ORAI1. Interacts with ORAI1. Interacts with MAPRE1; probably required for targeting to the growing microtubule plus ends. Interacts with CRACR2A/EFCAB4B; the interaction is direct and takes place in absence of Ca(2+). Forms a complex with CRACR2A/EFCAB4B and ORAI1 at low concentration of Ca(2+), the complex dissociates at elevated Ca(2+) concentrations. Interacts with SARAF, promoting a slow inactivation of STIM1-dependent SOCE activity, possibly by facilitating the deoligomerization of STIM1. Interacts with EFHB; the interaction takes place upon Ca(2+)-store depletion and inhibits the association with SARAF. Interacts with ASPH. Interacts with SLC35G1; intracellular Ca(2+)-dependent. May interact with ATP1A1, ATP2A2, ATP2B1, ATP2B4, KPNB1 and XPO1; through SLC35G1. Interacts with TMEM203. Interacts with STIMATE, promoting STIM1 conformational switch. Interacts with TMEM178A. Interacts with CASQ1 (via C-terminal end and preferentially with the monomeric form); this interaction increases in response to a depletion of intracellular Ca(2+), decreases both STIM1 aggregation and clustering, interaction of STIM1 with ORAI1 and store-operated Ca(2+) entry (SOCE) activity. Interacts with ADCY8. Post-translationally, glycosylation is required for cell surface expression. In terms of processing, phosphorylated predominantly on Ser residues.

It localises to the cell membrane. It is found in the endoplasmic reticulum membrane. The protein localises to the sarcoplasmic reticulum. Its subcellular location is the cytoplasm. The protein resides in the cytoskeleton. Acts as a Ca(2+) sensor that gates two major inward rectifying Ca(2+) channels at the plasma membrane: Ca(2+) release-activated Ca(2+) (CRAC) channels and arachidonate-regulated Ca(2+)-selective (ARC) channels. Plays a role in mediating store-operated Ca(2+) entry (SOCE), a Ca(2+) influx following depletion of intracellular Ca(2+) stores. Upon Ca(2+) depletion, translocates from the endoplasmic reticulum to the plasma membrane where it activates CRAC channel pore-forming subunits ORA1, ORA2 and ORAI3 to generate sustained and oscillatory Ca(2+) entry. Involved in enamel formation. This Rattus norvegicus (Rat) protein is Stromal interaction molecule 1.